A 132-amino-acid chain; its full sequence is Small ribosomal subunit protein uS8 (132 aa).

It belongs to the universal ribosomal protein uS8 family. Part of the 30S ribosomal subunit. Contacts proteins S5 and S12.

Its function is as follows. One of the primary rRNA binding proteins, it binds directly to 16S rRNA central domain where it helps coordinate assembly of the platform of the 30S subunit. The chain is Small ribosomal subunit protein uS8 from Leuconostoc citreum (strain KM20).